Here is a 210-residue protein sequence, read N- to C-terminus: Nucleoside triphosphate pyrophosphatase (210 aa).

Asp-80 (proton acceptor) is an active-site residue.

It belongs to the Maf family. A divalent metal cation serves as cofactor.

Its subcellular location is the cytoplasm. The enzyme catalyses a ribonucleoside 5'-triphosphate + H2O = a ribonucleoside 5'-phosphate + diphosphate + H(+). It carries out the reaction a 2'-deoxyribonucleoside 5'-triphosphate + H2O = a 2'-deoxyribonucleoside 5'-phosphate + diphosphate + H(+). Functionally, nucleoside triphosphate pyrophosphatase. May have a dual role in cell division arrest and in preventing the incorporation of modified nucleotides into cellular nucleic acids. This chain is Nucleoside triphosphate pyrophosphatase, found in Mycobacterium sp. (strain JLS).